A 198-amino-acid chain; its full sequence is Dual specificity protein phosphatase 13B (198 aa).

A Tyrosine-protein phosphatase domain is found at H45 to R193. Catalysis depends on C138, which acts as the Phosphocysteine intermediate.

It belongs to the protein-tyrosine phosphatase family. Non-receptor class dual specificity subfamily. As to expression, highly expressed in the testis (at protein level). Also found in the skeletal muscle.

The enzyme catalyses O-phospho-L-tyrosyl-[protein] + H2O = L-tyrosyl-[protein] + phosphate. It carries out the reaction O-phospho-L-seryl-[protein] + H2O = L-seryl-[protein] + phosphate. It catalyses the reaction O-phospho-L-threonyl-[protein] + H2O = L-threonyl-[protein] + phosphate. In terms of biological role, dual specificity phosphatase that dephosphorylates MAPK8/JNK and MAPK14/p38, but not MAPK1/ERK2, in vitro. Exhibits intrinsic phosphatase activity towards both phospho-seryl/threonyl and -tyrosyl residues, with similar specific activities in vitro. The sequence is that of Dual specificity protein phosphatase 13B from Homo sapiens (Human).